We begin with the raw amino-acid sequence, 212 residues long: Adenylate kinase (212 aa).

10–15 contributes to the ATP binding site; it reads GSGKGT. The interval 30 to 59 is NMP; that stretch reads STGDLMRKEINDETPLGIECARYMNEGRLV. AMP is bound by residues Thr-31, Arg-36, 57-59, and Gln-90; that span reads RLV. The segment at 124-161 is LID; the sequence is GRLICPKCKVSYHIISRKPKLEGICDNDGTELVRRPDD. Arg-125 is a binding site for ATP. Cys-128 and Cys-131 together coordinate Zn(2+). 134–135 is an ATP binding site; the sequence is SY. Positions 148 and 151 each coordinate Zn(2+). AMP is bound by residues Arg-158 and Arg-169. Asn-198 is an ATP binding site.

The protein belongs to the adenylate kinase family. Monomer.

It localises to the cytoplasm. It catalyses the reaction AMP + ATP = 2 ADP. Its pathway is purine metabolism; AMP biosynthesis via salvage pathway; AMP from ADP: step 1/1. Functionally, catalyzes the reversible transfer of the terminal phosphate group between ATP and AMP. Plays an important role in cellular energy homeostasis and in adenine nucleotide metabolism. This chain is Adenylate kinase, found in Mesoplasma florum (strain ATCC 33453 / NBRC 100688 / NCTC 11704 / L1) (Acholeplasma florum).